A 110-amino-acid chain; its full sequence is Small ribosomal subunit protein uS17 (110 aa).

It belongs to the universal ribosomal protein uS17 family. As to quaternary structure, part of the 30S ribosomal subunit.

In terms of biological role, one of the primary rRNA binding proteins, it binds specifically to the 5'-end of 16S ribosomal RNA. This Petrotoga mobilis (strain DSM 10674 / SJ95) protein is Small ribosomal subunit protein uS17.